Here is a 997-residue protein sequence, read N- to C-terminus: Translation initiation factor IF-2 (997 aa).

Residues 36-415 are disordered; that stretch reads SMAGSLTTEE…ATQPLKAAKR (380 aa). Basic and acidic residues-rich tracts occupy residues 45–65 and 94–107; these read EAARVREHFAEQKQADAERSG and AREEVAPPAEEKPA. Residues 108–126 show a composition bias toward low complexity; that stretch reads AVEAPAQAEPVAEAPAASP. The span at 127-147 shows a compositional bias: basic and acidic residues; sequence HKVEEKAAPEAAKAEPAEKAK. The segment covering 151 to 162 has biased composition (low complexity); that stretch reads ARVVSAARVISR. The segment covering 163-181 has biased composition (basic and acidic residues); sequence PGEEEEKKPEPVVESKPEP. Residues 182-196 show a composition bias toward low complexity; it reads VAEISPVAAALAARE. 2 stretches are compositionally biased toward basic and acidic residues: residues 197–214 and 241–252; these read AAARAEEKSSEKGEEKGA and PEARTEAWKDAD. Gly residues predominate over residues 300-309; sequence GRPGAPGGPR. The segment covering 316–335 has biased composition (pro residues); the sequence is PPRPGGPRPSGPGGPRPAGG. Over residues 378–388 the composition is skewed to basic and acidic residues; sequence GGRRDDDDSQR. Residues 390 to 399 show a composition bias toward basic residues; that stretch reads NRGKGRRKGG. Positions 496–665 constitute a tr-type G domain; that stretch reads PRPPVVTIMG…ALQSEIMELK (170 aa). Positions 505 to 512 are G1; that stretch reads GHVDHGKT. 505-512 provides a ligand contact to GTP; sequence GHVDHGKT. The segment at 530–534 is G2; it reads GITQH. The G3 stretch occupies residues 551 to 554; it reads DTPG. Residues 551-555 and 605-608 each bind GTP; these read DTPGH and NKMD. The segment at 605-608 is G4; it reads NKMD. The tract at residues 641–643 is G5; it reads AAK.

The protein belongs to the TRAFAC class translation factor GTPase superfamily. Classic translation factor GTPase family. IF-2 subfamily.

Its subcellular location is the cytoplasm. Functionally, one of the essential components for the initiation of protein synthesis. Protects formylmethionyl-tRNA from spontaneous hydrolysis and promotes its binding to the 30S ribosomal subunits. Also involved in the hydrolysis of GTP during the formation of the 70S ribosomal complex. The protein is Translation initiation factor IF-2 of Desulfovibrio desulfuricans (strain ATCC 27774 / DSM 6949 / MB).